The following is a 160-amino-acid chain: Small ribosomal subunit protein bS6 (160 aa).

A disordered region spans residues 100-160; that stretch reads PSSVLARKSD…DDARETAGAE (61 aa). Basic and acidic residues-rich tracts occupy residues 106 to 116 and 136 to 160; these read RKSDDRGDRGN and RSSE…AGAE.

This sequence belongs to the bacterial ribosomal protein bS6 family.

In terms of biological role, binds together with bS18 to 16S ribosomal RNA. The chain is Small ribosomal subunit protein bS6 from Gluconobacter oxydans (strain 621H) (Gluconobacter suboxydans).